The chain runs to 384 residues: 8-amino-7-oxononanoate synthase (384 aa).

Arginine 21 contributes to the substrate binding site. Pyridoxal 5'-phosphate is bound at residue 108 to 109 (GF). Histidine 133 is a substrate binding site. Pyridoxal 5'-phosphate-binding residues include serine 179, histidine 207, and threonine 233. N6-(pyridoxal phosphate)lysine is present on lysine 236. Residue threonine 352 participates in substrate binding.

Belongs to the class-II pyridoxal-phosphate-dependent aminotransferase family. BioF subfamily. As to quaternary structure, homodimer. It depends on pyridoxal 5'-phosphate as a cofactor.

It catalyses the reaction 6-carboxyhexanoyl-[ACP] + L-alanine + H(+) = (8S)-8-amino-7-oxononanoate + holo-[ACP] + CO2. It functions in the pathway cofactor biosynthesis; biotin biosynthesis. Functionally, catalyzes the decarboxylative condensation of pimeloyl-[acyl-carrier protein] and L-alanine to produce 8-amino-7-oxononanoate (AON), [acyl-carrier protein], and carbon dioxide. This Escherichia coli O6:K15:H31 (strain 536 / UPEC) protein is 8-amino-7-oxononanoate synthase.